A 314-amino-acid polypeptide reads, in one-letter code: uncharacterized protein (314 aa).

The HTH araC/xylS-type domain maps to 192–289; it reads TEVKLHIKDN…GSSPGLFRSL (98 aa). 2 DNA-binding regions (H-T-H motif) span residues 209–230 and 257–279; these read TDVASHFHISGRHLSRLFAAEL and IKEIAEEIGFSVHYFTRVFSAKI.

This is an uncharacterized protein from Bacillus subtilis (strain 168).